The following is a 271-amino-acid chain: Regulatory protein RecX (271 aa).

This sequence belongs to the RecX family.

It is found in the cytoplasm. In terms of biological role, modulates RecA activity. The sequence is that of Regulatory protein RecX from Lactobacillus johnsonii (strain CNCM I-12250 / La1 / NCC 533).